Consider the following 284-residue polypeptide: L-ribulose-5-phosphate 3-epimerase UlaE (284 aa).

The protein belongs to the L-ribulose-5-phosphate 3-epimerase family.

It catalyses the reaction L-ribulose 5-phosphate = L-xylulose 5-phosphate. It functions in the pathway cofactor degradation; L-ascorbate degradation; D-xylulose 5-phosphate from L-ascorbate: step 3/4. Functionally, catalyzes the isomerization of L-xylulose-5-phosphate to L-ribulose-5-phosphate. Is involved in the anaerobic L-ascorbate utilization. The protein is L-ribulose-5-phosphate 3-epimerase UlaE of Escherichia coli O17:K52:H18 (strain UMN026 / ExPEC).